The primary structure comprises 204 residues: uncharacterized protein (204 aa).

Possibly involved in pGI2 replication mechanism. This is an uncharacterized protein from Bacillus thuringiensis.